Consider the following 936-residue polypeptide: Altered inheritance of mitochondria protein 3 (936 aa).

Disordered regions lie at residues 1 to 315 (MGFW…LNQN), 341 to 795 (MSST…EATG), 818 to 893 (NLEK…KSLE), and 908 to 936 (SAAD…HKLK). Residues 36–54 (ASKKHYNNSKARRERKSGK) show a composition bias toward basic residues. Phosphoserine is present on residues S57, S58, and S64. The segment covering 59–68 (DEEYESEDEM) has biased composition (acidic residues). Residues 69–84 (EHERKPTDIRSLKDPK) are compositionally biased toward basic and acidic residues. Composition is skewed to low complexity over residues 93–105 (PGQK…QQQQ) and 130–152 (QSQY…GVMP). Over residues 166–244 (GSNSNATSYQ…YVSHGSTNLG (79 aa)) the composition is skewed to polar residues. Composition is skewed to low complexity over residues 245–267 (QSQF…VLPS) and 306–315 (QQQQQPLNQN). Over residues 341–354 (MSSTTNMQDSNPSY) the composition is skewed to polar residues. Pro residues predominate over residues 366–382 (GGQPPVPVRMQPQPPQP). Over residues 453–462 (IQPNTTSSAA) the composition is skewed to polar residues. At S463 the chain carries Phosphoserine. Basic and acidic residues-rich tracts occupy residues 475–489 (DNER…DEST), 513–528 (HGLD…KNAS), and 598–615 (EIKD…DRNV). Low complexity-rich tracts occupy residues 622–632 (QSKSQSQSQSQ) and 656–665 (SQSSNSSDSS). A Phosphothreonine modification is found at T718. The span at 738-748 (DSSKDANKYEK) shows a compositional bias: basic and acidic residues. The span at 752-763 (PVTSSIQAQQST) shows a compositional bias: polar residues. T850 is modified (phosphothreonine). Over residues 851-868 (PPRPPPSRSSPKKVPPVV) the composition is skewed to pro residues. Residues 877–888 (KKPPVVPKKKPL) are compositionally biased toward basic residues.

Belongs to the AIM3 family. Interacts with RVS167.

It localises to the membrane raft. The polypeptide is Altered inheritance of mitochondria protein 3 (AIM3) (Saccharomyces cerevisiae (strain RM11-1a) (Baker's yeast)).